A 104-amino-acid polypeptide reads, in one-letter code: Large ribosomal subunit protein uL24 (104 aa).

It belongs to the universal ribosomal protein uL24 family. Part of the 50S ribosomal subunit.

One of two assembly initiator proteins, it binds directly to the 5'-end of the 23S rRNA, where it nucleates assembly of the 50S subunit. Functionally, one of the proteins that surrounds the polypeptide exit tunnel on the outside of the subunit. This is Large ribosomal subunit protein uL24 from Corynebacterium diphtheriae (strain ATCC 700971 / NCTC 13129 / Biotype gravis).